A 266-amino-acid polypeptide reads, in one-letter code: Putative carbamate hydrolase RutD (266 aa).

One can recognise an AB hydrolase-1 domain in the interval 15–128 (AVLLSSGLGG…NAHSARCFDA (114 aa)).

This sequence belongs to the AB hydrolase superfamily. Hydrolase RutD family.

It catalyses the reaction carbamate + 2 H(+) = NH4(+) + CO2. In terms of biological role, involved in pyrimidine catabolism. May facilitate the hydrolysis of carbamate, a reaction that can also occur spontaneously. The polypeptide is Putative carbamate hydrolase RutD (Variovorax paradoxus (strain S110)).